The following is a 570-amino-acid chain: Periplasmic trehalase (570 aa).

Residues 1-34 (MIPPEIRRSVLLQKAIKLALAGTLLTFASFSATA) form the signal peptide. Substrate contacts are provided by residues Arg159, 166–167 (WD), Asn203, 212–214 (RSQ), 284–286 (RPE), and Gly317. Active-site proton donor/acceptor residues include Asp319 and Glu503. Glu518 contributes to the substrate binding site. A disordered region spans residues 544–570 (KPCDSVPSTRPASLSATPTKTPSAATQ). The span at 554-570 (PASLSATPTKTPSAATQ) shows a compositional bias: low complexity.

Belongs to the glycosyl hydrolase 37 family. Monomer.

It is found in the periplasm. It catalyses the reaction alpha,alpha-trehalose + H2O = alpha-D-glucose + beta-D-glucose. Functionally, provides the cells with the ability to utilize trehalose at high osmolarity by splitting it into glucose molecules that can subsequently be taken up by the phosphotransferase-mediated uptake system. In Salmonella choleraesuis (strain SC-B67), this protein is Periplasmic trehalase.